The following is a 712-amino-acid chain: Exocyst complex component EXO70I (712 aa).

Positions 1–18 are cleaved as a signal peptide; sequence MHKKQLMALLMVPQTSDS. A coiled-coil region spans residues 26-53; that stretch reads LESAYSDLESLLRSSKQMEQNIETMETR. The N-linked (GlcNAc...) asparagine glycan is linked to N111.

Belongs to the EXO70 family. As to quaternary structure, subunit of the exocyst complex that mediates vesicle tethering during exocytosis. Interacts with VPY at the periarbuscular membrane (PAM) around the arbuscule hyphal tips. In terms of tissue distribution, present at low levels in non-mycorrhizal root tips.

Its subcellular location is the cell membrane. Component of an exocyst subcomplex specifically required for periarbuscular membrane (PAM) biogenesis during arbuscular mycorrhizal (AM) symbiosis with AM fungi (e.g. Glomus versiforme), especially critical during the early branching phase of arbuscule development; probably involved in STR and STR2 delivery into the PAM. The protein is Exocyst complex component EXO70I of Medicago truncatula (Barrel medic).